Reading from the N-terminus, the 196-residue chain is Guanylate kinase (196 aa).

The 184-residue stretch at 8 to 191 folds into the Guanylate kinase-like domain; the sequence is GRLIVLTGPT…AAADLWSVIA (184 aa). ATP is bound at residue 15-22; it reads GPTAVGKG.

This sequence belongs to the guanylate kinase family.

It localises to the cytoplasm. It catalyses the reaction GMP + ATP = GDP + ADP. Essential for recycling GMP and indirectly, cGMP. This Bifidobacterium longum (strain NCC 2705) protein is Guanylate kinase.